A 470-amino-acid polypeptide reads, in one-letter code: Cell division protein FtsP (470 aa).

The tat-type signal signal peptide spans 1 to 29 (MKNCSRRQLLKTTLFSTALFSVPAPLLAA).

The protein belongs to the FtsP family. Predicted to be exported by the Tat system. The position of the signal peptide cleavage has not been experimentally proven.

The protein localises to the periplasm. Its function is as follows. Cell division protein that is required for growth during stress conditions. May be involved in protecting or stabilizing the divisomal assembly under conditions of stress. This Aggregatibacter aphrophilus (strain NJ8700) (Haemophilus aphrophilus) protein is Cell division protein FtsP.